The following is a 122-amino-acid chain: Large ribosomal subunit protein bL12 (122 aa).

This sequence belongs to the bacterial ribosomal protein bL12 family. In terms of assembly, homodimer. Part of the ribosomal stalk of the 50S ribosomal subunit. Forms a multimeric L10(L12)X complex, where L10 forms an elongated spine to which 2 to 4 L12 dimers bind in a sequential fashion. Binds GTP-bound translation factors.

Functionally, forms part of the ribosomal stalk which helps the ribosome interact with GTP-bound translation factors. Is thus essential for accurate translation. The chain is Large ribosomal subunit protein bL12 from Neisseria lactamica.